A 557-amino-acid chain; its full sequence is Formate--tetrahydrofolate ligase 2 (557 aa).

66–73 (TPAGEGKT) is an ATP binding site.

Belongs to the formate--tetrahydrofolate ligase family.

The enzyme catalyses (6S)-5,6,7,8-tetrahydrofolate + formate + ATP = (6R)-10-formyltetrahydrofolate + ADP + phosphate. The protein operates within one-carbon metabolism; tetrahydrofolate interconversion. The protein is Formate--tetrahydrofolate ligase 2 of Streptococcus pyogenes serotype M1.